A 98-amino-acid chain; its full sequence is PqqA binding protein (98 aa).

Belongs to the PqqD family. In terms of assembly, monomer. Interacts with PqqE.

It functions in the pathway cofactor biosynthesis; pyrroloquinoline quinone biosynthesis. Functions as a PqqA binding protein and presents PqqA to PqqE, in the pyrroloquinoline quinone (PQQ) biosynthetic pathway. The chain is PqqA binding protein from Pseudomonas syringae pv. tomato (strain ATCC BAA-871 / DC3000).